The following is a 134-amino-acid chain: 4-carboxymuconolactone decarboxylase (134 aa).

The protein belongs to the carboxymuconolactone decarboxylase family.

The catalysed reaction is (R)-2-(carboxymethyl)-5-oxo-2,5-dihydro-2-furoate + H(+) = (4,5-dihydro-5-oxofuran-2-yl)-acetate + CO2. It functions in the pathway aromatic compound metabolism; beta-ketoadipate pathway; 5-oxo-4,5-dihydro-2-furylacetate from 3-carboxy-cis,cis-muconate: step 2/2. This is 4-carboxymuconolactone decarboxylase (pcaC) from Acinetobacter baylyi (strain ATCC 33305 / BD413 / ADP1).